The following is a 208-amino-acid chain: dTTP/UTP pyrophosphatase (208 aa).

Aspartate 78 (proton acceptor) is an active-site residue.

Belongs to the Maf family. YhdE subfamily. Requires a divalent metal cation as cofactor.

It localises to the cytoplasm. The enzyme catalyses dTTP + H2O = dTMP + diphosphate + H(+). It carries out the reaction UTP + H2O = UMP + diphosphate + H(+). Functionally, nucleoside triphosphate pyrophosphatase that hydrolyzes dTTP and UTP. May have a dual role in cell division arrest and in preventing the incorporation of modified nucleotides into cellular nucleic acids. The protein is dTTP/UTP pyrophosphatase of Maricaulis maris (strain MCS10) (Caulobacter maris).